The following is a 225-amino-acid chain: Small ribosomal subunit protein uS3 (225 aa).

Positions valine 16–lysine 85 constitute a KH type-2 domain. A disordered region spans residues glycine 200 to serine 225. Positions glutamate 208–arginine 217 are enriched in basic and acidic residues.

Belongs to the universal ribosomal protein uS3 family. In terms of assembly, part of the 30S ribosomal subunit.

In terms of biological role, binds the lower part of the 30S subunit head. In Thermoplasma volcanium (strain ATCC 51530 / DSM 4299 / JCM 9571 / NBRC 15438 / GSS1), this protein is Small ribosomal subunit protein uS3.